We begin with the raw amino-acid sequence, 204 residues long: Somatotropin (204 aa).

The first 17 residues, 1-17 (MDRAILLLSVLSVGVSS), serve as a signal peptide directing secretion. The residue at position 18 (glutamine 18) is a Pyrrolidone carboxylic acid. Residue histidine 35 coordinates Zn(2+). Cysteine 69 and cysteine 177 are oxidised to a cystine. Glutamate 186 lines the Zn(2+) pocket. A disulfide bridge links cysteine 194 with cysteine 202.

It belongs to the somatotropin/prolactin family.

It is found in the secreted. In terms of biological role, growth hormone plays an important role in growth control and is involved in the regulation of several anabolic processes. Implicated as an osmoregulatory substance important for seawater adaptation. In Dicentrarchus labrax (European seabass), this protein is Somatotropin (gh).